A 385-amino-acid polypeptide reads, in one-letter code: Type III polyketide synthase C (385 aa).

Residue 56 to 63 participates in CoA binding; it reads KLQHLCKS. Catalysis depends on Cys-165, which acts as the Nucleophile. 217-218 is a substrate binding site; it reads GD. CoA is bound by residues Leu-267, 307–310, and Ala-310; that span reads GGPA.

The protein belongs to the thiolase-like superfamily. Chalcone/stilbene synthases family. Homodimer.

It localises to the endoplasmic reticulum. The protein operates within secondary metabolite biosynthesis; flavonoid biosynthesis. Plant type III polyketide synthases (PKSs) that catalyzes the condensation of malonyl-CoA units with various CoA ester starter molecules to generate a diverse array of natural products including long-chain alkyl alpha-pyrones. The sequence is that of Type III polyketide synthase C from Arabidopsis thaliana (Mouse-ear cress).